Consider the following 546-residue polypeptide: Phosphomethylpyrimidine synthase (546 aa).

A compositionally biased stretch (polar residues) spans 1–19; the sequence is MSTPSSRSQAPETVTTGPI. Residues 1 to 20 are disordered; the sequence is MSTPSSRSQAPETVTTGPIQ. Residues Asn-146, Met-175, Tyr-204, His-240, 260–262, 301–304, and Glu-340 contribute to the substrate site; these read SRG and DGLR. His-344 provides a ligand contact to Zn(2+). Tyr-367 contributes to the substrate binding site. His-408 provides a ligand contact to Zn(2+). Cys-488, Cys-491, and Cys-496 together coordinate [4Fe-4S] cluster.

The protein belongs to the ThiC family. [4Fe-4S] cluster is required as a cofactor.

It catalyses the reaction 5-amino-1-(5-phospho-beta-D-ribosyl)imidazole + S-adenosyl-L-methionine = 4-amino-2-methyl-5-(phosphooxymethyl)pyrimidine + CO + 5'-deoxyadenosine + formate + L-methionine + 3 H(+). It functions in the pathway cofactor biosynthesis; thiamine diphosphate biosynthesis. In terms of biological role, catalyzes the synthesis of the hydroxymethylpyrimidine phosphate (HMP-P) moiety of thiamine from aminoimidazole ribotide (AIR) in a radical S-adenosyl-L-methionine (SAM)-dependent reaction. This chain is Phosphomethylpyrimidine synthase, found in Mycobacteroides abscessus (strain ATCC 19977 / DSM 44196 / CCUG 20993 / CIP 104536 / JCM 13569 / NCTC 13031 / TMC 1543 / L948) (Mycobacterium abscessus).